Reading from the N-terminus, the 139-residue chain is Endoribonuclease YbeY (139 aa).

His-99, His-103, and His-109 together coordinate Zn(2+).

It belongs to the endoribonuclease YbeY family. Requires Zn(2+) as cofactor.

The protein localises to the cytoplasm. Functionally, single strand-specific metallo-endoribonuclease involved in late-stage 70S ribosome quality control and in maturation of the 3' terminus of the 16S rRNA. The protein is Endoribonuclease YbeY of Sulfurimonas denitrificans (strain ATCC 33889 / DSM 1251) (Thiomicrospira denitrificans (strain ATCC 33889 / DSM 1251)).